The following is a 206-amino-acid chain: Proteasome subunit beta 1 (206 aa).

A propeptide spans 1 to 5 (removed in mature form; by autocatalysis); it reads MLMKG. Catalysis depends on Thr6, which acts as the Nucleophile.

It belongs to the peptidase T1B family. As to quaternary structure, the 20S proteasome core is composed of 14 alpha and 14 beta subunits that assemble into four stacked heptameric rings, resulting in a barrel-shaped structure. The two inner rings, each composed of seven catalytic beta subunits, are sandwiched by two outer rings, each composed of seven alpha subunits. The catalytic chamber with the active sites is on the inside of the barrel. Has a gated structure, the ends of the cylinder being occluded by the N-termini of the alpha-subunits. Is capped at one or both ends by the proteasome regulatory ATPase, PAN.

The protein resides in the cytoplasm. It carries out the reaction Cleavage of peptide bonds with very broad specificity.. The formation of the proteasomal ATPase PAN-20S proteasome complex, via the docking of the C-termini of PAN into the intersubunit pockets in the alpha-rings, triggers opening of the gate for substrate entry. Interconversion between the open-gate and close-gate conformations leads to a dynamic regulation of the 20S proteasome proteolysis activity. In terms of biological role, component of the proteasome core, a large protease complex with broad specificity involved in protein degradation. This Korarchaeum cryptofilum (strain OPF8) protein is Proteasome subunit beta 1.